Here is a 154-residue protein sequence, read N- to C-terminus: Cyanate hydratase (154 aa).

Catalysis depends on residues R100, E103, and S126.

This sequence belongs to the cyanase family.

The catalysed reaction is cyanate + hydrogencarbonate + 3 H(+) = NH4(+) + 2 CO2. Its function is as follows. Catalyzes the reaction of cyanate with bicarbonate to produce ammonia and carbon dioxide. The protein is Cyanate hydratase of Aspergillus fumigatus (strain CBS 144.89 / FGSC A1163 / CEA10) (Neosartorya fumigata).